We begin with the raw amino-acid sequence, 598 residues long: Mitochondrial distribution and morphology protein 30 (598 aa).

Positions 13–59 constitute an F-box domain; sequence SFTIDHLPPEIWLCISKLVGTSDLHNLCLINRRLYLTITSDEIWKRR.

As to quaternary structure, interacts with SKP1. Component of the probable SCF(MDM30) complex containing CDC53, SKP1, RBX1 and MDM30. Interacts with SKP1 and FZO1.

The protein resides in the cytoplasm. Its subcellular location is the mitochondrion. It participates in protein modification; protein ubiquitination. Functionally, substrate recognition component of a SCF (SKP1-CUL1-F-box protein) E3 ubiquitin-protein ligase complex which mediates the ubiquitination and subsequent proteasomal degradation of target proteins. Probably recognizes and binds to phosphorylated target proteins. Recognizes FZO1 and regulates the amount of FZO1. Regulatory factor for the mitochondrial fusion machinery. Required for mitochondrial DNA maintenance. The protein is Mitochondrial distribution and morphology protein 30 (MDM30) of Saccharomyces cerevisiae (strain ATCC 204508 / S288c) (Baker's yeast).